Here is a 751-residue protein sequence, read N- to C-terminus: Collagen alpha-1(XIII) chain (751 aa).

The interval M1–G24 is disordered. Topologically, residues M1–P40 are cytoplasmic. The tract at residues M1 to P119 is nonhelical region 1 (NC1). Over residues R15–G24 the composition is skewed to gly residues. The chain crosses the membrane as a helical; Signal-anchor for type II membrane protein span at residues G41–A59. The Extracellular segment spans residues H60–K751. Disordered regions lie at residues A108–R127, P190–H225, and T265–D449. Over residues N116–T125 the composition is skewed to pro residues. The triple-helical region 1 (COL1) stretch occupies residues G120–Y223. Positions P204–Q213 are enriched in low complexity. The span at K214–H225 shows a compositional bias: basic and acidic residues. Residues P224–T273 are nonhelical region 2 (NC2). The triple-helical region 2 (COL2) stretch occupies residues G274–G445. 3 stretches are compositionally biased toward pro residues: residues P278–S288, L296–K312, and P391–P402. Low complexity predominate over residues K403–K436. A compositionally biased stretch (basic and acidic residues) spans A438 to M447. Residues E446–M467 form a nonhelical region 3 (NC3) region. The N-linked (GlcNAc...) asparagine glycan is linked to N451. A disordered region spans residues L466–K751. A triple-helical region 3 (COL3) region spans residues G468 to D733. The span at P470 to T484 shows a compositional bias: pro residues. 3 stretches are compositionally biased toward basic and acidic residues: residues H499–P509, T557–R568, and E586–P596. Residues P601–P613 are compositionally biased toward pro residues. Positions L615 to E628 are enriched in low complexity. Residues S630–R643 are compositionally biased toward basic and acidic residues. The span at P658–A673 shows a compositional bias: pro residues. Positions D684 to L699 are enriched in low complexity. The segment covering K706–D726 has biased composition (basic and acidic residues). A nonhelical region 4 (NC4) region spans residues A734–K751.

As to quaternary structure, homotrimer; disulfide-linked. Nucleation of the type XIII collagen triple helix is likely to occur at the N-terminal region with triple helix formation proceeding from the N- to the C-terminus. Interacts with FN1, perlecan/HSPG2 and NID2.

The protein localises to the cell membrane. It localises to the postsynaptic cell membrane. Its function is as follows. Involved in cell-matrix and cell-cell adhesion interactions that are required for normal development. May participate in the linkage between muscle fiber and basement membrane. May play a role in endochondral ossification of bone and branching morphogenesis of lung. Binds heparin. At neuromuscular junctions, may play a role in acetylcholine receptor clustering. In Mus musculus (Mouse), this protein is Collagen alpha-1(XIII) chain.